Reading from the N-terminus, the 108-residue chain is Transcription initiation factor IIA subunit 2 (108 aa).

It belongs to the TFIIA subunit 2 family. As to quaternary structure, TFIIA is a heterodimer of the large unprocessed subunit 1 and a small subunit gamma. It was originally believed to be a heterotrimer of an alpha, a beta and a gamma subunit. Interacts with NCOA6 general coactivator. TFIIA forms a complex with TBP.

The protein resides in the nucleus. Its function is as follows. TFIIA is a component of the transcription machinery of RNA polymerase II and plays an important role in transcriptional activation. TFIIA in a complex with TBP mediates transcriptional activity. The sequence is that of Transcription initiation factor IIA subunit 2 (gtf2a2) from Oncorhynchus mykiss (Rainbow trout).